We begin with the raw amino-acid sequence, 42 residues long: uncharacterized protein (42 aa).

A helical membrane pass occupies residues 15–37 (PLILAVDCAIIIPNTNFIHSFLI).

It is found in the membrane. This is an uncharacterized protein from Dictyostelium discoideum (Social amoeba).